The sequence spans 779 residues: Polyribonucleotide nucleotidyltransferase (779 aa).

Mg(2+) is bound by residues D490 and D496. The KH domain occupies 557 to 618 (PHILSLKINP…EAVKARIEAV (62 aa)). An S1 motif domain is found at 625–693 (GEEFEGTVVK…DRGKIDLIRP (69 aa)). Positions 699 to 752 (VPLREPRAPRGGDRGPRRDSDRGGDRGPRREFSDRGPRPEGARSERPEGQRTER) are enriched in basic and acidic residues. The interval 699-779 (VPLREPRAPR…AAPVFPRRED (81 aa)) is disordered. Polar residues predominate over residues 757-767 (PATQESSQSSD).

This sequence belongs to the polyribonucleotide nucleotidyltransferase family. Mg(2+) serves as cofactor.

Its subcellular location is the cytoplasm. It carries out the reaction RNA(n+1) + phosphate = RNA(n) + a ribonucleoside 5'-diphosphate. In terms of biological role, involved in mRNA degradation. Catalyzes the phosphorolysis of single-stranded polyribonucleotides processively in the 3'- to 5'-direction. This is Polyribonucleotide nucleotidyltransferase from Deinococcus radiodurans (strain ATCC 13939 / DSM 20539 / JCM 16871 / CCUG 27074 / LMG 4051 / NBRC 15346 / NCIMB 9279 / VKM B-1422 / R1).